We begin with the raw amino-acid sequence, 239 residues long: UPF0126 membrane protein VC_2382 (239 aa).

The next 6 helical transmembrane spans lie at 38–58 (LLYL…VLLA), 62–82 (KMDP…GGTI), 86–106 (ALGA…VIMI), 122–142 (AWWI…GIGV), 153–173 (LIAI…RDVL), and 185–205 (VYAT…AMGY).

It belongs to the UPF0126 family.

Its subcellular location is the cell membrane. The protein is UPF0126 membrane protein VC_2382 of Vibrio cholerae serotype O1 (strain ATCC 39315 / El Tor Inaba N16961).